We begin with the raw amino-acid sequence, 316 residues long: tRNA dimethylallyltransferase (316 aa).

17–24 provides a ligand contact to ATP; the sequence is GPTASGKT. 19–24 is a binding site for substrate; sequence TASGKT. Interaction with substrate tRNA regions lie at residues 42-45, 166-170, 247-252, and 280-287; these read DSAL, QRLSR, RCVGYR, and KRQITWLR.

This sequence belongs to the IPP transferase family. As to quaternary structure, monomer. Mg(2+) serves as cofactor.

The enzyme catalyses adenosine(37) in tRNA + dimethylallyl diphosphate = N(6)-dimethylallyladenosine(37) in tRNA + diphosphate. Catalyzes the transfer of a dimethylallyl group onto the adenine at position 37 in tRNAs that read codons beginning with uridine, leading to the formation of N6-(dimethylallyl)adenosine (i(6)A). This is tRNA dimethylallyltransferase from Shigella boydii serotype 18 (strain CDC 3083-94 / BS512).